The primary structure comprises 169 residues: uncharacterized protein (169 aa).

This is an uncharacterized protein from Escherichia coli (strain K12).